Reading from the N-terminus, the 548-residue chain is Chaperonin GroEL (548 aa).

ATP contacts are provided by residues 29–32, 86–90, Gly413, 476–478, and Asp492; these read TLGP, DGTTT, and NAL. Over residues 522–531 the composition is skewed to acidic residues; that stretch reads PDEDDNDDGD. The interval 522–548 is disordered; that stretch reads PDEDDNDDGDMGGGAPGMGGMGGMPGM. Gly residues predominate over residues 532-548; that stretch reads MGGGAPGMGGMGGMPGM.

The protein belongs to the chaperonin (HSP60) family. As to quaternary structure, forms a cylinder of 14 subunits composed of two heptameric rings stacked back-to-back. Interacts with the co-chaperonin GroES.

The protein localises to the cytoplasm. It catalyses the reaction ATP + H2O + a folded polypeptide = ADP + phosphate + an unfolded polypeptide.. In terms of biological role, together with its co-chaperonin GroES, plays an essential role in assisting protein folding. The GroEL-GroES system forms a nano-cage that allows encapsulation of the non-native substrate proteins and provides a physical environment optimized to promote and accelerate protein folding. This is Chaperonin GroEL from Natranaerobius thermophilus (strain ATCC BAA-1301 / DSM 18059 / JW/NM-WN-LF).